The following is a 348-amino-acid chain: Aspartate carbamoyltransferase catalytic subunit (348 aa).

Carbamoyl phosphate-binding residues include Arg-57 and Thr-58. Lys-86 is a binding site for L-aspartate. Residues Arg-107, His-135, and Gln-138 each coordinate carbamoyl phosphate. L-aspartate is bound by residues Arg-172 and Arg-234. Residues Leu-274 and Pro-275 each contribute to the carbamoyl phosphate site.

Belongs to the aspartate/ornithine carbamoyltransferase superfamily. ATCase family. In terms of assembly, heterododecamer (2C3:3R2) of six catalytic PyrB chains organized as two trimers (C3), and six regulatory PyrI chains organized as three dimers (R2).

The catalysed reaction is carbamoyl phosphate + L-aspartate = N-carbamoyl-L-aspartate + phosphate + H(+). It participates in pyrimidine metabolism; UMP biosynthesis via de novo pathway; (S)-dihydroorotate from bicarbonate: step 2/3. In terms of biological role, catalyzes the condensation of carbamoyl phosphate and aspartate to form carbamoyl aspartate and inorganic phosphate, the committed step in the de novo pyrimidine nucleotide biosynthesis pathway. In Dichelobacter nodosus (strain VCS1703A), this protein is Aspartate carbamoyltransferase catalytic subunit.